The following is a 1372-amino-acid chain: Capping protein, Arp2/3 and myosin-I linker protein 3 (1372 aa).

Residues 126 to 151 form a disordered region; sequence RGNADTPEGPRDTSPNSETSTSTTHS. Residues 138–151 show a composition bias toward low complexity; that stretch reads TSPNSETSTSTTHS. LRR repeat units follow at residues 244–264, 274–295, 303–323, 335–357, 365–385, 392–413, 424–444, 455–475, 482–501, and 509–530; these read SLEELVLDNAGLKTDFVQKLA, VLHALTLSHNPIEDKGFLSLSQ, GLTKLCLAKTAISPRGLQALG, SLRYLDLSKNPGLLATDEANALY, ALVHLDLSGTDCVIDLLLGAL, HLTYLNLARNSCSHRKGREAPP, TLSHVNLSATKLPLEALRALL, DLHLDLSSCELRSAGAQALQE, CVGSLDLSDNGFDSDLLTLV, and SLKHLFLGKNFNVKAKTLEEIL. Disordered regions lie at residues 865–900, 970–1003, and 1024–1372; these read TLSDPPGCPGQGQDLSSRGRGRNHDHEETTDDELGT, KLRHQTQGRPRPPRTTPPGPGRPSMPAPGTRQEN, and ESSS…PGTD. Residues 982–995 show a composition bias toward pro residues; that stretch reads PRTTPPGPGRPSMP. The segment at 1040-1073 is necessary for localization at the cell membrane; it reads SEAPLPPLQKKRRRGLFHFRRPRSFKGDRGPGSP. Residues 1048-1063 are compositionally biased toward basic residues; sequence QKKRRRGLFHFRRPRS. Residues 1079–1098 are compositionally biased toward pro residues; sequence LPPPPPPPPTQESPPSPDPP. Residues 1099 to 1109 are compositionally biased toward low complexity; that stretch reads SLGNNSSPCWS. Basic and acidic residues-rich tracts occupy residues 1163–1177 and 1219–1229; these read ERAKGWSFDGKREGP and RRAEATWHIAE. The span at 1233 to 1244 shows a compositional bias: polar residues; that stretch reads PNHSCQSPSPAS. A compositionally biased stretch (basic and acidic residues) spans 1348 to 1361; that stretch reads QSCDKLEPDRRRPP.

Belongs to the CARMIL family. As to expression, widely expressed, with much higher levels in fetal tissues than in adult ones. Up-regulated in certain cancer tissues.

Its subcellular location is the cytoplasm. The protein localises to the cell membrane. The polypeptide is Capping protein, Arp2/3 and myosin-I linker protein 3 (Homo sapiens (Human)).